A 542-amino-acid polypeptide reads, in one-letter code: Thermosome subunit alpha (542 aa).

Belongs to the TCP-1 chaperonin family. As to quaternary structure, forms a Heterooligomeric complex of two stacked eight-membered rings.

Molecular chaperone; binds unfolded polypeptides in vitro, and has a weak ATPase activity. The polypeptide is Thermosome subunit alpha (thsA) (Methanothermobacter thermautotrophicus (strain ATCC 29096 / DSM 1053 / JCM 10044 / NBRC 100330 / Delta H) (Methanobacterium thermoautotrophicum)).